A 246-amino-acid polypeptide reads, in one-letter code: Probable transcriptional regulatory protein Pden_1905 (246 aa).

Residues 1–21 (MAGHSKWANIQHRKGKQDKLR) are disordered.

This sequence belongs to the TACO1 family.

The protein localises to the cytoplasm. This chain is Probable transcriptional regulatory protein Pden_1905, found in Paracoccus denitrificans (strain Pd 1222).